The primary structure comprises 93 residues: PqqA binding protein (93 aa).

It belongs to the PqqD family. In terms of assembly, monomer. Interacts with PqqE.

The protein operates within cofactor biosynthesis; pyrroloquinoline quinone biosynthesis. Functionally, functions as a PqqA binding protein and presents PqqA to PqqE, in the pyrroloquinoline quinone (PQQ) biosynthetic pathway. This Methylococcus capsulatus (strain ATCC 33009 / NCIMB 11132 / Bath) protein is PqqA binding protein.